Reading from the N-terminus, the 209-residue chain is Large ribosomal subunit protein uL3 (209 aa).

It belongs to the universal ribosomal protein uL3 family. In terms of assembly, part of the 50S ribosomal subunit. Forms a cluster with proteins L14 and L19.

Functionally, one of the primary rRNA binding proteins, it binds directly near the 3'-end of the 23S rRNA, where it nucleates assembly of the 50S subunit. The polypeptide is Large ribosomal subunit protein uL3 (Clostridium botulinum (strain Okra / Type B1)).